A 115-amino-acid chain; its full sequence is Migration and invasion enhancer 1 (115 aa).

Position 2 is an N-acetylserine (serine 2). An intrachain disulfide couples cysteine 30 to cysteine 33. Cysteine 112 carries the S-geranylgeranyl cysteine lipid modification. Residues 113–115 (VIL) constitute a propeptide, removed in mature form.

The protein belongs to the SelWTH family. As to quaternary structure, interacts with GPX1. In terms of processing, isoprenylation facilitates association with the plasma membrane and enhances the migratory phenotype of cells by inducing increased filopodia formation. As to expression, widely expressed with highest levels in kidney followed by brain and testis.

The protein resides in the cytoplasm. Its subcellular location is the cytosol. It is found in the cell membrane. Functionally, increases cell migration by inducing filopodia formation at the leading edge of migrating cells. Plays a role in regulation of apoptosis, possibly through control of CASP3. May be involved in a redox-related process. In Mus musculus (Mouse), this protein is Migration and invasion enhancer 1 (Mien1).